Here is a 493-residue protein sequence, read N- to C-terminus: Lysostaphin (493 aa).

An N-terminal signal peptide occupies residues 1-23; the sequence is MKKTKNNYYTRPLAIGLSTFALA. The propeptide occupies 24–247; it reads SIVYGGIQNE…ALVQNRTALR (224 aa). A run of 14 repeats spans residues 49–61, 62–74, 75–87, 88–100, 101–113, 114–126, 127–139, 140–152, 153–165, 166–178, 179–191, 192–204, 205–217, and 218–230. Residues 49-243 form a 15 X 13 AA approximate tandem repeats of A-E-V-E-T-S-K-A-P-V-E-N-T region; sequence AEVETSKAPV…ETSKALVQNR (195 aa). The interval 52–232 is disordered; it reads ETSKAPVENT…SKAPVENTAE (181 aa). Residues 231-243 form a 15; approximate repeat; the sequence is AEVETSKALVQNR. Residues His279 and Asp283 each contribute to the Zn(2+) site. Residue His360 is part of the active site. Residue His362 participates in Zn(2+) binding. The SH3b domain occupies 413 to 481; the sequence is SESASFTPNT…YLPVRTWNKS (69 aa).

It belongs to the peptidase M23B family. Monomer. Zn(2+) is required as a cofactor.

It localises to the secreted. The catalysed reaction is Hydrolysis of the -Gly-|-Gly- bond in the pentaglycine inter-peptide link joining staphylococcal cell wall peptidoglycans.. Its function is as follows. Lyses staphylococcal cells by hydrolyzing the polyglycine interpeptide bridges of the peptidoglycan. This chain is Lysostaphin (lss), found in Staphylococcus simulans.